A 206-amino-acid polypeptide reads, in one-letter code: Holliday junction branch migration complex subunit RuvA (206 aa).

The interval 1–64 (MIGRLSGTIL…EDAQLLYGFN (64 aa)) is domain I. The tract at residues 65–143 (KKSERELFRE…GWGEGDLFTP (79 aa)) is domain II. A flexible linker region spans residues 144–157 (ASDAAASNAEIQKY). Positions 158 to 206 (SSARAEDEAVSALIALGYKALQAAKVVSQVVKPEMSSENIIREALRSMV) are domain III.

This sequence belongs to the RuvA family. As to quaternary structure, homotetramer. Forms an RuvA(8)-RuvB(12)-Holliday junction (HJ) complex. HJ DNA is sandwiched between 2 RuvA tetramers; dsDNA enters through RuvA and exits via RuvB. An RuvB hexamer assembles on each DNA strand where it exits the tetramer. Each RuvB hexamer is contacted by two RuvA subunits (via domain III) on 2 adjacent RuvB subunits; this complex drives branch migration. In the full resolvosome a probable DNA-RuvA(4)-RuvB(12)-RuvC(2) complex forms which resolves the HJ.

It localises to the cytoplasm. Its function is as follows. The RuvA-RuvB-RuvC complex processes Holliday junction (HJ) DNA during genetic recombination and DNA repair, while the RuvA-RuvB complex plays an important role in the rescue of blocked DNA replication forks via replication fork reversal (RFR). RuvA specifically binds to HJ cruciform DNA, conferring on it an open structure. The RuvB hexamer acts as an ATP-dependent pump, pulling dsDNA into and through the RuvAB complex. HJ branch migration allows RuvC to scan DNA until it finds its consensus sequence, where it cleaves and resolves the cruciform DNA. This chain is Holliday junction branch migration complex subunit RuvA, found in Photobacterium profundum (strain SS9).